The sequence spans 274 residues: Indole-3-glycerol phosphate synthase (274 aa).

The protein belongs to the TrpC family.

The enzyme catalyses 1-(2-carboxyphenylamino)-1-deoxy-D-ribulose 5-phosphate + H(+) = (1S,2R)-1-C-(indol-3-yl)glycerol 3-phosphate + CO2 + H2O. Its pathway is amino-acid biosynthesis; L-tryptophan biosynthesis; L-tryptophan from chorismate: step 4/5. The polypeptide is Indole-3-glycerol phosphate synthase (Kineococcus radiotolerans (strain ATCC BAA-149 / DSM 14245 / SRS30216)).